The primary structure comprises 278 residues: Undecaprenyl-diphosphatase (278 aa).

The next 8 helical transmembrane spans lie at 3–23 (YILI…IPIS), 42–62 (VAYS…IIYF), 88–108 (FLVI…LFVI), 112–132 (ILGL…IIIY), 152–172 (IIIV…RSGI), 190–210 (LSFI…VLFS), 225–245 (GLLI…NALL), and 253–273 (VVVL…LSGI).

The protein belongs to the UppP family.

It localises to the cell membrane. It carries out the reaction di-trans,octa-cis-undecaprenyl diphosphate + H2O = di-trans,octa-cis-undecaprenyl phosphate + phosphate + H(+). Catalyzes the dephosphorylation of undecaprenyl diphosphate (UPP). In Saccharolobus islandicus (strain M.14.25 / Kamchatka #1) (Sulfolobus islandicus), this protein is Undecaprenyl-diphosphatase.